Reading from the N-terminus, the 160-residue chain is MVPKLFTSPICLLLLLGLMGVEGSLHAKPGQFTWAQWFEIQHINMTSGQCTNAMLVINNYQRRCKNQNTFLLTTFADVVHVCGNPSMPCPSNTSLNNCHHSGVQVPLIHCNLTTPSQNISNCKYTQTTANKFYIVACNNSDPVRDPPQYPVVPVHLDRVI.

Residues M1–A27 form the signal peptide. C-linked (Man) tryptophan glycosylation occurs at W34. Residue H42 is the Proton acceptor of the active site. Residue N44 is glycosylated (N-linked (GlcNAc...) asparagine). 4 disulfides stabilise this stretch: C50–C110, C64–C122, C82–C137, and C89–C98. 3'-nitrotyrosine is present on Y60. Residue K65 to T69 coordinates substrate. N-linked (GlcNAc...) asparagine glycosylation is found at N92, N111, N118, and N138. The Proton donor role is filled by H155.

Belongs to the pancreatic ribonuclease family. Interacts with and forms a tight 1:1 complex with RNH1. Dimerization of two such complexes may occur.

It is found in the lysosome. The protein localises to the cytoplasmic granule. It carries out the reaction an [RNA] containing cytidine + H2O = an [RNA]-3'-cytidine-3'-phosphate + a 5'-hydroxy-ribonucleotide-3'-[RNA].. The catalysed reaction is an [RNA] containing uridine + H2O = an [RNA]-3'-uridine-3'-phosphate + a 5'-hydroxy-ribonucleotide-3'-[RNA].. In terms of biological role, this is a non-secretory ribonuclease. It is a pyrimidine specific nuclease with a slight preference for U. Cytotoxin and helminthotoxin. Possesses a wide variety of biological activities. In Chlorocebus aethiops (Green monkey), this protein is Non-secretory ribonuclease (RNASE2).